The following is a 382-amino-acid chain: Ferredoxin--NADP reductase, root isozyme 2, chloroplastic (382 aa).

A chloroplast-targeting transit peptide spans M1 to I64. In terms of domain architecture, FAD-binding FR-type spans K97–L225. A disulfide bridge connects residues C200 and C205. S201 is subject to Phosphoserine. Residue T233 is modified to Phosphothreonine. NADP(+) is bound at residue I235–M253.

The protein belongs to the ferredoxin--NADP reductase type 1 family. FAD serves as cofactor. As to expression, expressed in shoots and roots. More abundant in roots than RFNR1.

It localises to the plastid. Its subcellular location is the chloroplast. The enzyme catalyses 2 reduced [2Fe-2S]-[ferredoxin] + NADP(+) + H(+) = 2 oxidized [2Fe-2S]-[ferredoxin] + NADPH. Its function is as follows. Maintains the supply of reduced ferredoxin under non-photosynthetic conditions. This chain is Ferredoxin--NADP reductase, root isozyme 2, chloroplastic (RFNR2), found in Arabidopsis thaliana (Mouse-ear cress).